A 549-amino-acid polypeptide reads, in one-letter code: MSSFYSEPYYSTSYKRRYVETPRVHISSVRSGYSTARSAYSSYSAPVSSSLSVRRSYSSSSGLMPSLENLDLSQVAAISNDLKSIRTQEKAQLQDLNDRFASFIERVHELEQQNKVLEAQLLVLRQKHSEPSRFRALYEQEIRDLRLAAEDATNEKQALQGEREGLEETLRNLQARYEEEVLSREDAEGRLMEARKGADEAALARAELEKRIDSLMDEIAFLKKVHEEEIAELQAQIQYAQISVEMDVSSKPDLSAALKDIRAQYEKLAAKNMQNAEEWFKSRFTVLTESAAKNTDAVRAAKDEVSESRRLLKAKTLEIEACRGMNEALEKQLQELEDKQNADISAMQDTINKLENELRTTKSEMARYLKEYQDLLNVKMALDIEIAAYRKLLEGEETRLSFTSVGSLTTGYSQSSQVFGRSAYGGLQTSSYLMSTRSFPSYYTSHVQEEQIEVEETIEAAKAEEAKDEPPSEGEAEEEGKEKEEAEAEAEAEEEGAQEEEEAAEKEESEEAKEEEGGEGEQGEETKEAEEEEKKDEGAGEEQATKKKD.

Ser2 carries the post-translational modification N-acetylserine. The tract at residues 2-92 (SSFYSEPYYS…KSIRTQEKAQ (91 aa)) is head. Thr21 carries O-linked (GlcNAc) threonine glycosylation. Position 23 is an asymmetric dimethylarginine; alternate (Arg23). Arg23 bears the Omega-N-methylarginine; alternate mark. O-linked (GlcNAc) serine glycosylation occurs at Ser27. The residue at position 30 (Arg30) is an Omega-N-methylarginine. Position 43 is a phosphotyrosine (Tyr43). Phosphoserine is present on residues Ser56, Ser66, and Ser102. An IF rod domain is found at 89 to 400 (EKAQLQDLND…KLLEGEETRL (312 aa)). A coil 1A region spans residues 93-124 (LQDLNDRFASFIERVHELEQQNKVLEAQLLVL). The tract at residues 125 to 137 (RQKHSEPSRFRAL) is linker 1. The tract at residues 138–233 (YEQEIRDLRL…KVHEEEIAEL (96 aa)) is coil 1B. The interval 234–252 (QAQIQYAQISVEMDVSSKP) is linker 12. The coil 2A stretch occupies residues 253–271 (DLSAALKDIRAQYEKLAAK). The tract at residues 272–280 (NMQNAEEWF) is linker 2. The coil 2B stretch occupies residues 281-396 (KSRFTVLTES…AAYRKLLEGE (116 aa)). The epitope; recognized by IF-specific monoclonal antibody stretch occupies residues 381–391 (ALDIEIAAYRK). The interval 397-443 (ETRLSFTSVGSLTTGYSQSSQVFGRSAYGGLQTSSYLMSTRSFPSYY) is tail, subdomain A. The tract at residues 397-549 (ETRLSFTSVG…GEEQATKKKD (153 aa)) is tail. Positions 444–549 (TSHVQEEQIE…GEEQATKKKD (106 aa)) are tail, subdomain B (acidic). Positions 462 to 549 (KAEEAKDEPP…GEEQATKKKD (88 aa)) are disordered. Residues 471 to 534 (PSEGEAEEEG…ETKEAEEEEK (64 aa)) are compositionally biased toward acidic residues. Position 472 is a phosphoserine (Ser472). A Phosphothreonine modification is found at Thr526. Over residues 535 to 549 (KDEGAGEEQATKKKD) the composition is skewed to basic and acidic residues.

Belongs to the intermediate filament family. In terms of assembly, forms homodimers (in vitro). Forms heterodimers with NEFH or NEFM; which can further hetero-oligomerize (in vitro). Forms heterodimers with INA (in vitro). Interacts with ARHGEF28. Interacts with TRIM2. Post-translationally, O-glycosylated. Phosphorylated in the head and rod regions by the PKC kinase PKN1, leading to the inhibition of polymerization. In terms of processing, ubiquitinated in the presence of TRIM2 and UBE2D1.

It localises to the cell projection. The protein resides in the axon. It is found in the cytoplasm. Its subcellular location is the cytoskeleton. Functionally, neurofilaments usually contain three intermediate filament proteins: NEFL, NEFM, and NEFH which are involved in the maintenance of neuronal caliber. May additionally cooperate with the neuronal intermediate filament proteins PRPH and INA to form neuronal filamentous networks. The polypeptide is Neurofilament light polypeptide (NEFL) (Sus scrofa (Pig)).